The sequence spans 479 residues: Anaerobic nitric oxide reductase flavorubredoxin (479 aa).

The zinc metallo-hydrolase stretch occupies residues 30–210 (LRGSSYNSYL…PFSRLVTPKI (181 aa)). Fe cation is bound by residues His-79, Glu-81, Asp-83, His-147, Asp-166, and His-227. Residues 254–393 (ITIFYDTMSN…LCRQHGRDIA (140 aa)) enclose the Flavodoxin-like domain. Residues 260–264 (TMSNN) and 342–369 (AFGS…EMSL) each bind FMN. Residues 423–474 (GPKMQCSVCQWIYDPALGEPLQDVAPGTPWSEVPDNFLCPECSLGKDVFDVL) enclose the Rubredoxin-like domain. Residues Cys-428, Cys-431, Cys-461, and Cys-464 each coordinate Fe cation.

The protein in the N-terminal section; belongs to the zinc metallo-hydrolase group 3 family. As to quaternary structure, homotetramer. Fe cation serves as cofactor. It depends on FMN as a cofactor.

Its subcellular location is the cytoplasm. It functions in the pathway nitrogen metabolism; nitric oxide reduction. In terms of biological role, anaerobic nitric oxide reductase; uses NADH to detoxify nitric oxide (NO), protecting several 4Fe-4S NO-sensitive enzymes. Has at least 2 reductase partners, only one of which (NorW, flavorubredoxin reductase) has been identified. NO probably binds to the di-iron center; electrons enter from the NorW at rubredoxin and are transferred sequentially to the FMN center and the di-iron center. Also able to function as an aerobic oxygen reductase. In Salmonella paratyphi A (strain ATCC 9150 / SARB42), this protein is Anaerobic nitric oxide reductase flavorubredoxin.